We begin with the raw amino-acid sequence, 205 residues long: Phosphoenolpyruvate guanylyltransferase (205 aa).

Positions 138, 154, and 157 each coordinate phosphoenolpyruvate.

The protein belongs to the CofC family.

It carries out the reaction phosphoenolpyruvate + GTP + H(+) = enolpyruvoyl-2-diphospho-5'-guanosine + diphosphate. It participates in cofactor biosynthesis; coenzyme F420 biosynthesis. Functionally, guanylyltransferase that catalyzes the activation of phosphoenolpyruvate (PEP) as enolpyruvoyl-2-diphospho-5'-guanosine, via the condensation of PEP with GTP. It is involved in the biosynthesis of coenzyme F420, a hydride carrier cofactor. The sequence is that of Phosphoenolpyruvate guanylyltransferase from Chloroflexus aurantiacus (strain ATCC 29364 / DSM 637 / Y-400-fl).